A 141-amino-acid chain; its full sequence is uncharacterized protein (141 aa).

A helical membrane pass occupies residues 13–35 (PVIGVILMVAITVILAAVIASFV).

The protein resides in the membrane. This is an uncharacterized protein from Archaeoglobus fulgidus (strain ATCC 49558 / DSM 4304 / JCM 9628 / NBRC 100126 / VC-16).